Here is a 436-residue protein sequence, read N- to C-terminus: Trigger factor (436 aa).

Positions 161–246 (DDRVTVDFVG…VNKVEGLSLP (86 aa)) constitute a PPIase FKBP-type domain.

Belongs to the FKBP-type PPIase family. Tig subfamily.

The protein localises to the cytoplasm. It catalyses the reaction [protein]-peptidylproline (omega=180) = [protein]-peptidylproline (omega=0). Functionally, involved in protein export. Acts as a chaperone by maintaining the newly synthesized protein in an open conformation. Functions as a peptidyl-prolyl cis-trans isomerase. The chain is Trigger factor from Pseudoalteromonas atlantica (strain T6c / ATCC BAA-1087).